Here is a 128-residue protein sequence, read N- to C-terminus: Fluoride-specific ion channel FluC (128 aa).

4 consecutive transmembrane segments (helical) span residues 7–27 (LAIGIGGFIGAILRAYTAGLV), 37–57 (FGTLSVNLIGSLLLGMFIGAI), 73–93 (TGMMGAFTTFSTFAVESFFLF), and 96–116 (ALYIQALSYILLNVIGCIILA). The Na(+) site is built by Gly-77 and Thr-80.

It belongs to the fluoride channel Fluc/FEX (TC 1.A.43) family.

The protein resides in the cell inner membrane. The enzyme catalyses fluoride(in) = fluoride(out). Na(+) is not transported, but it plays an essential structural role and its presence is essential for fluoride channel function. Functionally, fluoride-specific ion channel. Important for reducing fluoride concentration in the cell, thus reducing its toxicity. The chain is Fluoride-specific ion channel FluC from Nautilia profundicola (strain ATCC BAA-1463 / DSM 18972 / AmH).